The following is a 160-amino-acid chain: Protein MGF 300-2R (160 aa).

Belongs to the asfivirus MGF 300 family.

Functionally, plays a role in virus cell tropism, and may be required for efficient virus replication in macrophages. This African swine fever virus (isolate Pig/Kenya/KEN-50/1950) (ASFV) protein is Protein MGF 300-2R.